Reading from the N-terminus, the 333-residue chain is Glycerol-3-phosphate dehydrogenase [NAD(P)+] (333 aa).

Positions 13, 14, 34, and 108 each coordinate NADPH. Sn-glycerol 3-phosphate is bound by residues K108, G137, and S139. An NADPH-binding site is contributed by A141. The sn-glycerol 3-phosphate site is built by K192, D245, S255, R256, and N257. K192 (proton acceptor) is an active-site residue. R256 provides a ligand contact to NADPH. E282 provides a ligand contact to NADPH.

It belongs to the NAD-dependent glycerol-3-phosphate dehydrogenase family.

The protein resides in the cytoplasm. It carries out the reaction sn-glycerol 3-phosphate + NAD(+) = dihydroxyacetone phosphate + NADH + H(+). It catalyses the reaction sn-glycerol 3-phosphate + NADP(+) = dihydroxyacetone phosphate + NADPH + H(+). Its pathway is membrane lipid metabolism; glycerophospholipid metabolism. Functionally, catalyzes the reduction of the glycolytic intermediate dihydroxyacetone phosphate (DHAP) to sn-glycerol 3-phosphate (G3P), the key precursor for phospholipid synthesis. In Thioalkalivibrio sulfidiphilus (strain HL-EbGR7), this protein is Glycerol-3-phosphate dehydrogenase [NAD(P)+].